Consider the following 225-residue polypeptide: Ribosomal RNA large subunit methyltransferase E (225 aa).

Residues glycine 64, tryptophan 66, aspartate 93, aspartate 109, and aspartate 138 each coordinate S-adenosyl-L-methionine. The active-site Proton acceptor is the lysine 178.

The protein belongs to the class I-like SAM-binding methyltransferase superfamily. RNA methyltransferase RlmE family.

The protein localises to the cytoplasm. The enzyme catalyses uridine(2552) in 23S rRNA + S-adenosyl-L-methionine = 2'-O-methyluridine(2552) in 23S rRNA + S-adenosyl-L-homocysteine + H(+). In terms of biological role, specifically methylates the uridine in position 2552 of 23S rRNA at the 2'-O position of the ribose in the fully assembled 50S ribosomal subunit. The chain is Ribosomal RNA large subunit methyltransferase E from Cupriavidus pinatubonensis (strain JMP 134 / LMG 1197) (Cupriavidus necator (strain JMP 134)).